Consider the following 189-residue polypeptide: Small ribosomal subunit protein uS5 (189 aa).

The S5 DRBM domain occupies 22–85; it reads FVDKLVAINR…ESAKRDLIFV (64 aa).

It belongs to the universal ribosomal protein uS5 family. As to quaternary structure, part of the 30S ribosomal subunit. Contacts proteins S4 and S8.

Its function is as follows. With S4 and S12 plays an important role in translational accuracy. Located at the back of the 30S subunit body where it stabilizes the conformation of the head with respect to the body. This chain is Small ribosomal subunit protein uS5, found in Agrobacterium fabrum (strain C58 / ATCC 33970) (Agrobacterium tumefaciens (strain C58)).